The sequence spans 473 residues: Photosystem II CP43 reaction center protein (473 aa).

A propeptide spanning residues 1 to 14 (MKTLYSLRRFYPVE) is cleaved from the precursor. An N-acetylthreonine modification is found at Thr-15. A Phosphothreonine modification is found at Thr-15. 5 helical membrane passes run 69-93 (LFEVAHFVPEKPMYEQGLILLPHLA), 134-155 (LLGPETLEESFPFFGYVWKDRN), 178-200 (KALYFGGVYDTWAPGGGDVRKIT), 255-275 (KPFAWARRALVWSGEAYLSYS), and 291-312 (WFNNTAYPSEFYGPTGPEASQA). Glu-367 lines the [CaMn4O5] cluster pocket. The helical transmembrane segment at 447-471 (RARAAAAGFEKGIDRDFEPVLSMTP) threads the bilayer.

It belongs to the PsbB/PsbC family. PsbC subfamily. As to quaternary structure, PSII is composed of 1 copy each of membrane proteins PsbA, PsbB, PsbC, PsbD, PsbE, PsbF, PsbH, PsbI, PsbJ, PsbK, PsbL, PsbM, PsbT, PsbX, PsbY, PsbZ, Psb30/Ycf12, at least 3 peripheral proteins of the oxygen-evolving complex and a large number of cofactors. It forms dimeric complexes. Binds multiple chlorophylls and provides some of the ligands for the Ca-4Mn-5O cluster of the oxygen-evolving complex. It may also provide a ligand for a Cl- that is required for oxygen evolution. PSII binds additional chlorophylls, carotenoids and specific lipids. serves as cofactor.

It is found in the plastid. Its subcellular location is the chloroplast thylakoid membrane. Its function is as follows. One of the components of the core complex of photosystem II (PSII). It binds chlorophyll and helps catalyze the primary light-induced photochemical processes of PSII. PSII is a light-driven water:plastoquinone oxidoreductase, using light energy to abstract electrons from H(2)O, generating O(2) and a proton gradient subsequently used for ATP formation. The chain is Photosystem II CP43 reaction center protein from Lactuca sativa (Garden lettuce).